The following is a 339-amino-acid chain: Phenylalanine--tRNA ligase alpha subunit (339 aa).

Glu254 contacts Mg(2+).

This sequence belongs to the class-II aminoacyl-tRNA synthetase family. Phe-tRNA synthetase alpha subunit type 1 subfamily. Tetramer of two alpha and two beta subunits. Mg(2+) is required as a cofactor.

The protein resides in the cytoplasm. It carries out the reaction tRNA(Phe) + L-phenylalanine + ATP = L-phenylalanyl-tRNA(Phe) + AMP + diphosphate + H(+). The polypeptide is Phenylalanine--tRNA ligase alpha subunit (Clostridium kluyveri (strain ATCC 8527 / DSM 555 / NBRC 12016 / NCIMB 10680 / K1)).